We begin with the raw amino-acid sequence, 501 residues long: Acid-sensing ion channel 1A (501 aa).

Over 1–54 (MKTSVMDLKVEPMDIDFDQPPPLQVFAHTSTLHGISHIFSYEKITAKCCLWVVF) the chain is Cytoplasmic. Residues 55 to 71 (FLSSLTFLMYVCIDRIQ) traverse the membrane as a helical segment. Topologically, residues 72 to 429 (FYLEYPHVTK…ETIEQRKAYE (358 aa)) are extracellular. Cystine bridges form between Cys-98–Cys-199, Cys-177–Cys-184, Cys-294–Cys-369, Cys-312–Cys-365, Cys-316–Cys-363, Cys-325–Cys-347, and Cys-327–Cys-339. The N-linked (GlcNAc...) asparagine glycan is linked to Asn-164. An N-linked (GlcNAc...) asparagine glycan is attached at Asn-370. The discontinuously helical transmembrane segment at 430–460 (VAGLLGDIGGQMGLFIGASILTILELFDYLY) threads the bilayer. The short motif at 446–448 (GAS) is the GAS motif; ion selectivity filter element. At 461–501 (EVMKYRLCRCSNKKHHNNNNNTDHNAVFSLDDVNCHVSKFH) the chain is on the cytoplasmic side.

It belongs to the amiloride-sensitive sodium channel (TC 1.A.6) family. ASIC1 subfamily. As to quaternary structure, homotrimer. Heterotrimer; with other ASIC proteins producing channel with different properties. Interacts with asic1c. Expressed in central nervous system. Faintly expressed in the trunk, presumably in dorsal root ganglia.

Its subcellular location is the cell membrane. It is found in the postsynaptic cell membrane. It localises to the cell projection. The protein resides in the dendrite. It catalyses the reaction Na(+)(in) = Na(+)(out). The enzyme catalyses K(+)(in) = K(+)(out). The catalysed reaction is Li(+)(in) = Li(+)(out). It carries out the reaction Ca(2+)(in) = Ca(2+)(out). With respect to regulation, inhibited by the diuretic drug amiloride. Its function is as follows. Forms voltage-independent, pH-gated trimeric sodium channels that act as postsynaptic excitatory receptors in the nervous system, playing a crucial role in regulating synaptic plasticity, learning, and memory. Upon extracellular pH drop this channel elicits transient, fast activating, and completely desensitizing inward currents. Displays high selectivity for sodium ions but can also permit the permeation of other cations. The polypeptide is Acid-sensing ion channel 1A (asic1a) (Danio rerio (Zebrafish)).